A 399-amino-acid polypeptide reads, in one-letter code: Leu/Ile/Val-binding protein homolog 7 (399 aa).

The N-terminal stretch at 1–22 is a signal peptide; it reads MEKHLIALSVAALLAGAAPASA.

The protein belongs to the leucine-binding protein family.

In terms of biological role, component of an amino-acid transport system. The sequence is that of Leu/Ile/Val-binding protein homolog 7 from Brucella suis biovar 1 (strain 1330).